The following is a 376-amino-acid chain: Ribonucleoside-diphosphate reductase subunit beta (376 aa).

Fe cation contacts are provided by Asp-85, Glu-116, and His-119. Tyr-123 is a catalytic residue. Fe cation is bound by residues Glu-205, Glu-239, and His-242.

The protein belongs to the ribonucleoside diphosphate reductase small chain family. Tetramer of two alpha and two beta subunits. Fe cation serves as cofactor.

The catalysed reaction is a 2'-deoxyribonucleoside 5'-diphosphate + [thioredoxin]-disulfide + H2O = a ribonucleoside 5'-diphosphate + [thioredoxin]-dithiol. Provides the precursors necessary for DNA synthesis. Catalyzes the biosynthesis of deoxyribonucleotides from the corresponding ribonucleotides. The chain is Ribonucleoside-diphosphate reductase subunit beta (nrdB) from Buchnera aphidicola subsp. Baizongia pistaciae (strain Bp).